We begin with the raw amino-acid sequence, 82 residues long: Penaeidin-3b (82 aa).

The N-terminal stretch at 1 to 19 (MRLVVCLVFLASFALVCQG) is a signal peptide. The residue at position 20 (Gln-20) is a Pyrrolidone carboxylic acid. 3 cysteine pairs are disulfide-bonded: Cys-51/Cys-66, Cys-55/Cys-73, and Cys-67/Cys-74. Ser-81 is modified (serine amide).

This sequence belongs to the penaeidin family. As to expression, higher expression in hemocytes and to a lesser extent in heart, testis, gills, intestine, lymphoid organ and hepatopancreas. Traces in eyes and subcuticular epithelium. Not present in the brain.

The protein localises to the cytoplasmic granule. In terms of biological role, antibacterial activity against M.luteus and E.coli bacteria. Antifungal activity against N.crassa and F.oxysporum. Presents chitin-binding activity. This chain is Penaeidin-3b, found in Penaeus vannamei (Whiteleg shrimp).